We begin with the raw amino-acid sequence, 208 residues long: ATP-dependent dethiobiotin synthetase BioD (208 aa).

ATP is bound at residue 11–16 (EVGKTF). Thr-15 lines the Mg(2+) pocket. The active site involves Lys-31. Substrate is bound at residue Ser-35. ATP-binding positions include Asp-42, 95 to 98 (ETSG), and 155 to 156 (NQ). Residues Asp-42 and Glu-95 each contribute to the Mg(2+) site.

The protein belongs to the dethiobiotin synthetase family. As to quaternary structure, homodimer. The cofactor is Mg(2+).

It localises to the cytoplasm. The enzyme catalyses (7R,8S)-7,8-diammoniononanoate + CO2 + ATP = (4R,5S)-dethiobiotin + ADP + phosphate + 3 H(+). The protein operates within cofactor biosynthesis; biotin biosynthesis; biotin from 7,8-diaminononanoate: step 1/2. In terms of biological role, catalyzes a mechanistically unusual reaction, the ATP-dependent insertion of CO2 between the N7 and N8 nitrogen atoms of 7,8-diaminopelargonic acid (DAPA, also called 7,8-diammoniononanoate) to form a ureido ring. This Chlamydia felis (strain Fe/C-56) (Chlamydophila felis) protein is ATP-dependent dethiobiotin synthetase BioD.